A 126-amino-acid chain; its full sequence is Glycine cleavage system H protein (126 aa).

The region spanning T22–E104 is the Lipoyl-binding domain. K63 is subject to N6-lipoyllysine.

This sequence belongs to the GcvH family. The glycine cleavage system is composed of four proteins: P, T, L and H. (R)-lipoate serves as cofactor.

Functionally, the glycine cleavage system catalyzes the degradation of glycine. The H protein shuttles the methylamine group of glycine from the P protein to the T protein. Is also involved in protein lipoylation via its role as an octanoyl/lipoyl carrier protein intermediate. The sequence is that of Glycine cleavage system H protein from Staphylococcus saprophyticus subsp. saprophyticus (strain ATCC 15305 / DSM 20229 / NCIMB 8711 / NCTC 7292 / S-41).